A 472-amino-acid polypeptide reads, in one-letter code: Adenylyl cyclase-associated protein 1 (472 aa).

Alanine 2 is modified (N-acetylalanine). Tyrosine 31 carries the post-translational modification Phosphotyrosine. Serine 34 is subject to Phosphoserine. Lysine 81 carries the post-translational modification N6-acetyllysine. The tract at residues 216–253 (ELSGLPSGPSAGSGPPPPPPGPPPPPVPTSSGSDDSAS) is disordered. Positions 218–228 (SGLPSGPSAGS) are enriched in low complexity. Over residues 229–243 (GPPPPPPGPPPPPVP) the composition is skewed to pro residues. The segment covering 244 to 253 (TSSGSDDSAS) has biased composition (low complexity). Lysine 287 carries the N6-methyllysine modification. Phosphoserine is present on residues serine 290, serine 295, and serine 301. The segment at 290 to 312 (SGLIRSGPKPFSASKPDPPKPVA) is disordered. The region spanning 307-450 (PPKPVAKKEP…EGGDFNEFPV (144 aa)) is the C-CAP/cofactor C-like domain. Residue lysine 345 forms a Glycyl lysine isopeptide (Lys-Gly) (interchain with G-Cter in SUMO1) linkage.

Belongs to the CAP family. As to quaternary structure, homodimer. Binds actin monomers.

It localises to the cell membrane. Directly regulates filament dynamics and has been implicated in a number of complex developmental and morphological processes, including mRNA localization and the establishment of cell polarity. The chain is Adenylyl cyclase-associated protein 1 (CAP1) from Bos taurus (Bovine).